We begin with the raw amino-acid sequence, 44 residues long: Iota-conotoxin-like R11.11 (44 aa).

4 disulfides stabilise this stretch: C5/C19, C12/C22, C18/C27, and C21/C36. Position 44 (R44) is a propeptide, removed by a carboxypeptidase.

The protein belongs to the conotoxin I1 superfamily. Expressed by the venom duct.

It is found in the secreted. Iota-conotoxins bind to voltage-gated sodium channels (Nav) and act as agonists by shifting the voltage-dependence of activation to more hyperpolarized levels. Produces general excitatory symptoms. The sequence is that of Iota-conotoxin-like R11.11 from Conus radiatus (Rayed cone).